Consider the following 71-residue polypeptide: UPF0352 protein Ssed_1809 (71 aa).

Belongs to the UPF0352 family.

The sequence is that of UPF0352 protein Ssed_1809 from Shewanella sediminis (strain HAW-EB3).